We begin with the raw amino-acid sequence, 406 residues long: Gustatory receptor for sugar taste 64b (406 aa).

The Cytoplasmic portion of the chain corresponds to Met-1–Leu-47. Residues Tyr-48–Ile-68 form a helical membrane-spanning segment. The Extracellular portion of the chain corresponds to Lys-69–Thr-79. The helical transmembrane segment at Leu-80–Trp-100 threads the bilayer. The Cytoplasmic segment spans residues Pro-101–Arg-130. Residues Ile-131–Gly-151 traverse the membrane as a helical segment. At Asn-152–Tyr-183 the chain is on the extracellular side. An N-linked (GlcNAc...) asparagine glycan is attached at Asn-167. A helical membrane pass occupies residues Met-184–Ala-204. Over Tyr-205–Ala-265 the chain is Cytoplasmic. The chain crosses the membrane as a helical span at residues Ile-266 to Phe-286. The Extracellular portion of the chain corresponds to Asn-287–Lys-290. The helical transmembrane segment at Asn-291–Val-311 threads the bilayer. Topologically, residues Arg-312–Arg-370 are cytoplasmic. Residues Ser-371–Ile-391 traverse the membrane as a helical segment. Over Asn-392–Tyr-406 the chain is Extracellular.

The protein belongs to the insect chemoreceptor superfamily. Gustatory receptor (GR) family. Gr5a subfamily. Expressed in Gr5a-expressing sugar-sensing cells.

It localises to the cell membrane. Functionally, one of the few identified sugar gustatory receptors identified so far and which promotes the starvation-induced increase of feeding motivation. The sequence is that of Gustatory receptor for sugar taste 64b (Gr64b) from Drosophila melanogaster (Fruit fly).